Consider the following 420-residue polypeptide: uncharacterized protein (420 aa).

The next 6 membrane-spanning stretches (helical) occupy residues 26–46 (IFLLLVILVFVPIGFVFQSVI), 66–86 (SAIKSITLLFLLLLFVNWFTF), 231–251 (VILAFYVTQKILIMILFATVL), 276–296 (IPVNVFAMTIAIAIRFVPSLL), 317–337 (GFLVKMRSLSSLVVPMVSIAF), and 369–389 (IDILALFLVFAWFVVIIFLTI).

The protein belongs to the CbiQ family.

It is found in the cell membrane. This is an uncharacterized protein from Mycoplasma genitalium (strain ATCC 33530 / DSM 19775 / NCTC 10195 / G37) (Mycoplasmoides genitalium).